Consider the following 521-residue polypeptide: Glutamate--cysteine ligase (521 aa).

The protein belongs to the glutamate--cysteine ligase type 1 family. Type 1 subfamily.

It carries out the reaction L-cysteine + L-glutamate + ATP = gamma-L-glutamyl-L-cysteine + ADP + phosphate + H(+). The protein operates within sulfur metabolism; glutathione biosynthesis; glutathione from L-cysteine and L-glutamate: step 1/2. This Aliivibrio fischeri (strain MJ11) (Vibrio fischeri) protein is Glutamate--cysteine ligase.